The primary structure comprises 116 residues: Fluoride-specific ion channel FluC 1 (116 aa).

Helical transmembrane passes span 1-21, 31-51, 58-78, and 92-112; these read MGKL…RYTV, IPAG…FLTF, MVYL…TFAY, and FFLN…IAYL. The Na(+) site is built by glycine 68 and threonine 71.

The protein belongs to the fluoride channel Fluc/FEX (TC 1.A.43) family.

It localises to the cell membrane. It catalyses the reaction fluoride(in) = fluoride(out). Na(+) is not transported, but it plays an essential structural role and its presence is essential for fluoride channel function. Its function is as follows. Fluoride-specific ion channel. Important for reducing fluoride concentration in the cell, thus reducing its toxicity. This Methanosarcina barkeri (strain Fusaro / DSM 804) protein is Fluoride-specific ion channel FluC 1.